The chain runs to 352 residues: Biotin synthase (352 aa).

Positions 44 to 262 (NRVQVSTLLS…LAVARIMMPK (219 aa)) constitute a Radical SAM core domain. Positions 59, 63, and 66 each coordinate [4Fe-4S] cluster. Residues C103, C134, C194, and R266 each coordinate [2Fe-2S] cluster.

This sequence belongs to the radical SAM superfamily. Biotin synthase family. Homodimer. The cofactor is [4Fe-4S] cluster. It depends on [2Fe-2S] cluster as a cofactor.

It catalyses the reaction (4R,5S)-dethiobiotin + (sulfur carrier)-SH + 2 reduced [2Fe-2S]-[ferredoxin] + 2 S-adenosyl-L-methionine = (sulfur carrier)-H + biotin + 2 5'-deoxyadenosine + 2 L-methionine + 2 oxidized [2Fe-2S]-[ferredoxin]. The protein operates within cofactor biosynthesis; biotin biosynthesis; biotin from 7,8-diaminononanoate: step 2/2. Its function is as follows. Catalyzes the conversion of dethiobiotin (DTB) to biotin by the insertion of a sulfur atom into dethiobiotin via a radical-based mechanism. This chain is Biotin synthase, found in Pseudomonas aeruginosa (strain LESB58).